The sequence spans 484 residues: Glutamate--tRNA ligase (484 aa).

Residues 11 to 21 (PSPTGYLHIGN) carry the 'HIGH' region motif. The 'KMSKS' region signature appears at 252–256 (KLSKR). ATP is bound at residue K255.

This sequence belongs to the class-I aminoacyl-tRNA synthetase family. Glutamate--tRNA ligase type 1 subfamily. In terms of assembly, monomer.

The protein localises to the cytoplasm. The enzyme catalyses tRNA(Glu) + L-glutamate + ATP = L-glutamyl-tRNA(Glu) + AMP + diphosphate. Its function is as follows. Catalyzes the attachment of glutamate to tRNA(Glu) in a two-step reaction: glutamate is first activated by ATP to form Glu-AMP and then transferred to the acceptor end of tRNA(Glu). This Staphylococcus haemolyticus (strain JCSC1435) protein is Glutamate--tRNA ligase.